The primary structure comprises 620 residues: Lamin-B2 (620 aa).

Positions 1–38 are disordered; sequence MSPPSPGRRREQRRPRAAATMATPLPGRAGGPATPLSP. The head stretch occupies residues 1-48; the sequence is MSPPSPGRRREQRRPRAAATMATPLPGRAGGPATPLSPTRLSRLQEKE. Residues threonine 23 and threonine 34 each carry the phosphothreonine modification. Position 37 is a phosphoserine (serine 37). An IF rod domain is found at 46–402; that stretch reads EKEELRELND…KLLEGEEERL (357 aa). The segment at 49-83 is coil 1A; sequence ELRELNDRLAHYIDRVRALELENDRLLLKISEKEE. Lysine 77 is covalently cross-linked (Glycyl lysine isopeptide (Lys-Gly) (interchain with G-Cter in SUMO2)). Lysine 81 carries the N6-acetyllysine; alternate modification. Lysine 81 is covalently cross-linked (Glycyl lysine isopeptide (Lys-Gly) (interchain with G-Cter in SUMO2); alternate). Residues 84-95 form a linker 1 region; that stretch reads VTTREVSGIKAL. The coil 1B stretch occupies residues 96–229; it reads YESELADARR…DFRKSVFEEE (134 aa). Glycyl lysine isopeptide (Lys-Gly) (interchain with G-Cter in SUMO2) cross-links involve residues lysine 195 and lysine 255. Positions 230-256 are linker 2; that stretch reads VRETRRRHERRLVEVDSSRQQEYDFKM. Residues 257 to 400 are coil 2; the sequence is AQALEELRSQ…YRKLLEGEEE (144 aa). 2 positions are modified to phosphoserine: serine 316 and serine 407. The tract at residues 399–464 is disordered; the sequence is EERLKLSPSP…GTGGSGGFHL (66 aa). Residues 401-620 form a tail region; it reads RLKLSPSPSS…RTTSRGCYVM (220 aa). Residues 404–431 are compositionally biased toward low complexity; the sequence is LSPSPSSRVTVSRATSSSSGSLSATGRL. Threonine 413 is a glycosylation site (O-linked (GlcNAc) threonine). Residues serine 420, serine 422, serine 424, and serine 426 each carry the phosphoserine modification. Arginine 433 carries the omega-N-methylarginine modification. The short motif at 435 to 440 is the Nuclear localization signal element; it reads KRKRLE. A compositionally biased stretch (low complexity) spans 444–453; sequence PLGSGPSVLG. One can recognise an LTD domain in the interval 462-579; it reads FHLAQQASAS…EEVAMRTVKK (118 aa). Residue lysine 489 forms a Glycyl lysine isopeptide (Lys-Gly) (interchain with G-Cter in SUMO2) linkage. At serine 497 the chain carries Phosphoserine. The segment at 581–620 is disordered; it reads SVMRENENGEEEEEEAEFGEEDLFHQQGDPRTTSRGCYVM. Acidic residues predominate over residues 588 to 601; that stretch reads NGEEEEEEAEFGEE. The span at 609–620 shows a compositional bias: polar residues; sequence DPRTTSRGCYVM. Cysteine methyl ester is present on cysteine 617. Cysteine 617 is lipidated: S-farnesyl cysteine. A propeptide spans 618–620 (removed in mature form); sequence YVM.

It belongs to the intermediate filament family. As to quaternary structure, dimer. Lamin dimers then assemble into dimeric head-to-tail polymers. Ultimately, two head-to-tail polymers assemble laterally into a protofilament with a uniformly shaped rod of 3.5 nm in diameter. Interacts with TMEM43. B-type lamins undergo a series of modifications, such as farnesylation and phosphorylation. Increased phosphorylation of the lamins occurs before envelope disintegration and probably plays a role in regulating lamin associations. Post-translationally, phosphorylation plays a key role in lamin organization, subcellular localization and nuclear envelope disintegration. Phosphorylation by CDK1 at Ser-37 and Ser-407 at the onset of mitosis drives lamin disassembly and nuclear envelope breakdown.

It is found in the nucleus lamina. In terms of biological role, lamins are intermediate filament proteins that assemble into a filamentous meshwork, and which constitute the major components of the nuclear lamina, a fibrous layer on the nucleoplasmic side of the inner nuclear membrane. Lamins provide a framework for the nuclear envelope, bridging the nuclear envelope and chromatin, thereby playing an important role in nuclear assembly, chromatin organization, nuclear membrane and telomere dynamics. The structural integrity of the lamina is strictly controlled by the cell cycle, as seen by the disintegration and formation of the nuclear envelope in prophase and telophase, respectively. The chain is Lamin-B2 (LMNB2) from Homo sapiens (Human).